Consider the following 303-residue polypeptide: Monoglyceride lipase (303 aa).

T10 carries the phosphothreonine modification. 3'-nitrotyrosine is present on Y58. The active-site Nucleophile is S122. S189 is subject to Phosphoserine. Active-site charge relay system residues include D239 and H269.

This sequence belongs to the AB hydrolase superfamily. Monoacylglycerol lipase family. In terms of assembly, homodimer. As to expression, ubiquitous.

The protein resides in the cytoplasm. Its subcellular location is the cytosol. It localises to the membrane. It catalyses the reaction Hydrolyzes glycerol monoesters of long-chain fatty acids.. It carries out the reaction a 1-acylglycerol + H2O = glycerol + a fatty acid + H(+). The catalysed reaction is a 2-acylglycerol + H2O = glycerol + a fatty acid + H(+). The enzyme catalyses 2-(5Z,8Z,11Z,14Z-eicosatetraenoyl)-glycerol + H2O = glycerol + (5Z,8Z,11Z,14Z)-eicosatetraenoate + H(+). It catalyses the reaction 1-octanoylglycerol + H2O = octanoate + glycerol + H(+). It carries out the reaction 1-decanoylglycerol + H2O = decanoate + glycerol + H(+). The catalysed reaction is 1-dodecanoylglycerol + H2O = dodecanoate + glycerol + H(+). The enzyme catalyses 1-tetradecanoylglycerol + H2O = tetradecanoate + glycerol + H(+). It catalyses the reaction 2-hexadecanoylglycerol + H2O = glycerol + hexadecanoate + H(+). It carries out the reaction 1-(9Z-octadecenoyl)-glycerol + H2O = glycerol + (9Z)-octadecenoate + H(+). The catalysed reaction is 2-(9Z-octadecenoyl)-glycerol + H2O = glycerol + (9Z)-octadecenoate + H(+). The enzyme catalyses 2-(9Z,12Z-octadecadienoyl)-glycerol + H2O = (9Z,12Z)-octadecadienoate + glycerol + H(+). It catalyses the reaction 1-(5Z,8Z,11Z,14Z-eicosatetraenoyl)-glycerol + H2O = glycerol + (5Z,8Z,11Z,14Z)-eicosatetraenoate + H(+). It carries out the reaction 1-(9Z,12Z-octadecadienoyl)-glycerol + H2O = (9Z,12Z)-octadecadienoate + glycerol + H(+). The catalysed reaction is 1-hexadecanoylglycerol + H2O = glycerol + hexadecanoate + H(+). The enzyme catalyses 1-octadecanoylglycerol + H2O = octadecanoate + glycerol + H(+). It catalyses the reaction prostaglandin E2 1-glyceryl ester + H2O = prostaglandin E2 + glycerol + H(+). It carries out the reaction prostaglandin D2-1-glycerol ester + H2O = prostaglandin D2 + glycerol + H(+). The catalysed reaction is 2-glyceryl-15-deoxy-Delta(12,14)-prostaglandin J2 + H2O = 15-deoxy-Delta(12,14)-prostaglandin J2 + glycerol + H(+). The enzyme catalyses prostaglandin F2alpha 1-glyceryl ester + H2O = prostaglandin F2alpha + glycerol + H(+). It participates in glycerolipid metabolism; triacylglycerol degradation. In terms of biological role, converts monoacylglycerides to free fatty acids and glycerol. Hydrolyzes the endocannabinoid 2-arachidonoylglycerol, and thereby contributes to the regulation of endocannabinoid signaling, nociperception and perception of pain. Regulates the levels of fatty acids that serve as signaling molecules and promote cancer cell migration, invasion and tumor growth. The protein is Monoglyceride lipase of Mus musculus (Mouse).